The sequence spans 98 residues: NADH-ubiquinone oxidoreductase chain 4L (98 aa).

Transmembrane regions (helical) follow at residues 1–21, 29–49, and 59–79; these read MLSI…GVLI, TLLC…LLIT, and TPLI…ALLV.

This sequence belongs to the complex I subunit 4L family. In terms of assembly, core subunit of respiratory chain NADH dehydrogenase (Complex I) which is composed of 45 different subunits.

Its subcellular location is the mitochondrion inner membrane. It carries out the reaction a ubiquinone + NADH + 5 H(+)(in) = a ubiquinol + NAD(+) + 4 H(+)(out). Functionally, core subunit of the mitochondrial membrane respiratory chain NADH dehydrogenase (Complex I) which catalyzes electron transfer from NADH through the respiratory chain, using ubiquinone as an electron acceptor. Part of the enzyme membrane arm which is embedded in the lipid bilayer and involved in proton translocation. This is NADH-ubiquinone oxidoreductase chain 4L (MT-ND4L) from Sminthopsis crassicaudata (Fat-tailed dunnart).